Consider the following 151-residue polypeptide: Deoxyuridine 5'-triphosphate nucleotidohydrolase (151 aa).

Residues 70 to 72, Asn83, 87 to 89, and Met97 each bind substrate; these read RSG and LID.

Belongs to the dUTPase family. The cofactor is Mg(2+).

The enzyme catalyses dUTP + H2O = dUMP + diphosphate + H(+). It functions in the pathway pyrimidine metabolism; dUMP biosynthesis; dUMP from dCTP (dUTP route): step 2/2. Functionally, this enzyme is involved in nucleotide metabolism: it produces dUMP, the immediate precursor of thymidine nucleotides and it decreases the intracellular concentration of dUTP so that uracil cannot be incorporated into DNA. The sequence is that of Deoxyuridine 5'-triphosphate nucleotidohydrolase from Glaesserella parasuis serovar 5 (strain SH0165) (Haemophilus parasuis).